The chain runs to 482 residues: O-methyltransferase tpcA (482 aa).

Residues 293-294 (GG), aspartate 316, 348-349 (SF), and arginine 364 contribute to the S-adenosyl-L-methionine site. Residue histidine 368 is the Proton acceptor of the active site.

It belongs to the class I-like SAM-binding methyltransferase superfamily. Cation-independent O-methyltransferase family. Specifically expressed in conidia.

The protein operates within secondary metabolite biosynthesis. In terms of biological role, O-methyltransferase; part of the gene cluster that mediates the biosynthesis of trypacidin, a mycotoxin with antiprotozoal activity and that plays a role in the infection process. The pathway begins with the synthesis of atrochrysone thioester by the polyketide synthase (PKS) tpcC. The atrochrysone carboxyl ACP thioesterase tpcB then breaks the thioester bond and releases the atrochrysone carboxylic acid from tpcC. The decarboxylase tpcK converts atrochrysone carboxylic acid to atrochrysone which is further reduced into emodin anthrone. The next step is performed by the emodin anthrone oxygenase tpcL that catalyzes the oxidation of emodinanthrone to emodin. Emodin O-methyltransferase encoded by tpcA catalyzes methylation of the 8-hydroxy group of emodin to form questin. Ring cleavage of questin by questin oxidase tpcI leads to desmethylsulochrin via several intermediates including questin epoxide. Another methylation step catalyzed by tpcM leads to the formation of sulochrin which is further converted to monomethylsulfochrin by tpcH. Finally, the tpcJ catalyzes the conversion of monomethylsulfochrin to trypacidin. Trypacidin is toxic for human pulmonary and bronchial epithelial cells by initiating the intracellular formation of nitric oxide (NO) and hydrogen peroxide (H(2)O(2)), thus triggering host necrotic cell death. The trypacidin pathway is also able to produce endocrocin via a distinct route from the endocrocin Enc pathway. This is O-methyltransferase tpcA from Aspergillus fumigatus (strain ATCC MYA-4609 / CBS 101355 / FGSC A1100 / Af293) (Neosartorya fumigata).